Consider the following 110-residue polypeptide: U1-lycotoxin-Ls1dd (110 aa).

A signal peptide spans 1 to 20; sequence MKFVLLFGVLLVTLFSYSSA. A propeptide spanning residues 21–44 is cleaved from the precursor; that stretch reads EMLDDFDQADEDELLSLIEKEEAR. 4 disulfide bridges follow: Cys47/Cys62, Cys54/Cys71, Cys61/Cys89, and Cys73/Cys87.

It belongs to the neurotoxin 19 (CSTX) family. 03 subfamily. In terms of tissue distribution, expressed by the venom gland.

It is found in the secreted. The polypeptide is U1-lycotoxin-Ls1dd (Lycosa singoriensis (Wolf spider)).